Consider the following 237-residue polypeptide: BTB/POZ domain-containing protein KCTD6 (237 aa).

The BTB domain occupies 12 to 81 (HPVTLNVGGH…LRTSELTLPV (70 aa)).

Homopentamer. May be part of a cullin-containing E3 ubiquitin-protein ligase complex.

The protein operates within protein modification; protein ubiquitination. Probable substrate-specific adapter of a cullin-containing E3 ubiquitin-protein ligase complex mediating the ubiquitination and subsequent proteasomal degradation of target proteins. The sequence is that of BTB/POZ domain-containing protein KCTD6 (kctd6) from Danio rerio (Zebrafish).